The primary structure comprises 475 residues: ADP-ribosyltransferase toxin AexT (475 aa).

The Bacterial Rho-GAP domain maps to valine 93 to alanine 226. In terms of domain architecture, TR mART core spans glutamate 260–glutamate 436. Active-site residues include arginine 340, serine 364, and glutamate 403.

It localises to the secreted. Its function is as follows. Directly involved in the toxicity for RTG-2 (rainbow trout gonad) fish cells. This is ADP-ribosyltransferase toxin AexT (aexT) from Aeromonas salmonicida.